A 246-amino-acid chain; its full sequence is MRVVLQPAYVLHSRPYRETSALVEVFTPEYGRVGLVAKGVKRQRTHRFSLLQPFCPLLLSWTGRGDLVTLTGAEAAGPIPVLTGEGLICAFYLNELLLRLLPRRDPLEALFSVYAHSLPSLIHAQQRQQILRLFERDLLAYLGYGLILKYEAGTSRPIEAGQWYSYQLEKGPVRLLSEDLEGMKVRGHTLQALARGALADPASLGEAKRLLRWLLAFHLGDKPLKSRGLLEELRRLGNVSRKEERP.

The protein belongs to the RecO family.

Functionally, involved in DNA repair and RecF pathway recombination. The sequence is that of DNA repair protein RecO from Nitrosococcus oceani (strain ATCC 19707 / BCRC 17464 / JCM 30415 / NCIMB 11848 / C-107).